A 334-amino-acid chain; its full sequence is Cobalt-precorrin-5B C(1)-methyltransferase (334 aa).

The protein belongs to the CbiD family.

The enzyme catalyses Co-precorrin-5B + S-adenosyl-L-methionine = Co-precorrin-6A + S-adenosyl-L-homocysteine. The protein operates within cofactor biosynthesis; adenosylcobalamin biosynthesis; cob(II)yrinate a,c-diamide from sirohydrochlorin (anaerobic route): step 6/10. Its function is as follows. Catalyzes the methylation of C-1 in cobalt-precorrin-5B to form cobalt-precorrin-6A. This chain is Cobalt-precorrin-5B C(1)-methyltransferase, found in Methanoregula boonei (strain DSM 21154 / JCM 14090 / 6A8).